Here is a 389-residue protein sequence, read N- to C-terminus: Capreomycidine synthase (389 aa).

Lys-230 carries the post-translational modification N6-(pyridoxal phosphate)lysine.

The protein belongs to the class-II pyridoxal-phosphate-dependent aminotransferase family. It depends on pyridoxal 5'-phosphate as a cofactor.

It carries out the reaction (2S,3S)-hydroxyarginine = (2S,3R)-capreomycidine + H2O. The protein operates within antibiotic biosynthesis. In terms of biological role, involved in the biosynthesis of capreomycidine, an unusual amino acid used by non-ribosomal peptide synthases (NRPS) to make the tuberactinomycin class of peptide antibiotic such as viomycin and capreomycin. Catalyzes the dehydration of the C3 hydroxyl of (3S)-hydroxy-(2S)-arginine and the intramolecular cyclization to yield (2S,3R)-capreomycidine. In Streptomyces vinaceus, this protein is Capreomycidine synthase.